Reading from the N-terminus, the 335-residue chain is Lipase chaperone (335 aa).

A helical membrane pass occupies residues 1 to 21 (MSGSILLLPLAIALGLGFFIA).

The protein belongs to the lipase chaperone family.

The protein resides in the cell inner membrane. Functionally, may be involved in the folding of the extracellular lipase during its passage through the periplasm. In Stutzerimonas stutzeri (strain A1501) (Pseudomonas stutzeri), this protein is Lipase chaperone.